The following is a 710-amino-acid chain: Integrator complex subunit 10 (710 aa).

Phosphoserine occurs at positions 231, 381, and 382. A Glycyl lysine isopeptide (Lys-Gly) (interchain with G-Cter in SUMO2) cross-link involves residue K464.

This sequence belongs to the Integrator subunit 10 family. As to quaternary structure, component of the Integrator complex, composed of core subunits INTS1, INTS2, INTS3, INTS4, INTS5, INTS6, INTS7, INTS8, INTS9/RC74, INTS10, INTS11/CPSF3L, INTS12, INTS13, INTS14 and INTS15. The core complex associates with protein phosphatase 2A subunits PPP2CA and PPP2R1A, to form the Integrator-PP2A (INTAC) complex. INTS10 is part of the tail subcomplex, composed of INTS10, INTS13, INTS14 and INTS15.

The protein localises to the nucleus. Its function is as follows. Component of the integrator complex, a multiprotein complex that terminates RNA polymerase II (Pol II) transcription in the promoter-proximal region of genes. The integrator complex provides a quality checkpoint during transcription elongation by driving premature transcription termination of transcripts that are unfavorably configured for transcriptional elongation: the complex terminates transcription by (1) catalyzing dephosphorylation of the C-terminal domain (CTD) of Pol II subunit POLR2A/RPB1 and SUPT5H/SPT5, (2) degrading the exiting nascent RNA transcript via endonuclease activity and (3) promoting the release of Pol II from bound DNA. The integrator complex is also involved in terminating the synthesis of non-coding Pol II transcripts, such as enhancer RNAs (eRNAs), small nuclear RNAs (snRNAs), telomerase RNAs and long non-coding RNAs (lncRNAs). Within the integrator complex, INTS10 is part of the integrator tail module that acts as a platform for the recruitment of transcription factors at promoters. May be not involved in the recruitment of cytoplasmic dynein to the nuclear envelope, probably as component of the integrator complex. The polypeptide is Integrator complex subunit 10 (Homo sapiens (Human)).